Here is a 328-residue protein sequence, read N- to C-terminus: MTAAALQIAITTGEPAGVGPELTVQALQDAARRWPDAQFTVLGDAALLDARAAAVGADRAVLAGGPVSVQHHPLAAPAHAGTLDAANGRYVLALLDAAIDGALAGRYDAIVTAPLQKSTINDAGVPFTGHTEYLAERTHTPRVVMMLAGTGERPLRVALATTHLPLKDVSAALTIDGLVDTLAIIDRDLRRDFGLAAPRILVTGLNPHAGENGYLGREEIDVIAPALARASERGIDARGPYPADTLFQPRYLAGADCVLAMFHDQGLPVLKYATFGEGINVTLGLPIIRTSVDHGTALDLAGTGRADPGSMVAALDTAVTMARHRRAS.

The substrate site is built by H130 and T131. A divalent metal cation is bound by residues H163, H208, and H263. Residues K271, N280, and R289 each coordinate substrate.

The protein belongs to the PdxA family. As to quaternary structure, homodimer. The cofactor is Zn(2+). Mg(2+) serves as cofactor. It depends on Co(2+) as a cofactor.

It localises to the cytoplasm. The catalysed reaction is 4-(phosphooxy)-L-threonine + NAD(+) = 3-amino-2-oxopropyl phosphate + CO2 + NADH. It participates in cofactor biosynthesis; pyridoxine 5'-phosphate biosynthesis; pyridoxine 5'-phosphate from D-erythrose 4-phosphate: step 4/5. In terms of biological role, catalyzes the NAD(P)-dependent oxidation of 4-(phosphooxy)-L-threonine (HTP) into 2-amino-3-oxo-4-(phosphooxy)butyric acid which spontaneously decarboxylates to form 3-amino-2-oxopropyl phosphate (AHAP). This chain is 4-hydroxythreonine-4-phosphate dehydrogenase, found in Burkholderia vietnamiensis (strain G4 / LMG 22486) (Burkholderia cepacia (strain R1808)).